The following is a 216-amino-acid chain: Pyrrolidone-carboxylate peptidase (216 aa).

Residues Glu-80, Cys-143, and His-168 contribute to the active site.

The protein belongs to the peptidase C15 family. In terms of assembly, homotetramer.

The protein localises to the cytoplasm. The enzyme catalyses Release of an N-terminal pyroglutamyl group from a polypeptide, the second amino acid generally not being Pro.. Its function is as follows. Removes 5-oxoproline from various penultimate amino acid residues except L-proline. The chain is Pyrrolidone-carboxylate peptidase from Cupriavidus necator (strain ATCC 17699 / DSM 428 / KCTC 22496 / NCIMB 10442 / H16 / Stanier 337) (Ralstonia eutropha).